The sequence spans 400 residues: Queuine tRNA-ribosyltransferase catalytic subunit 1 (400 aa).

Asp-103 serves as the catalytic Proton acceptor. Queuine-binding positions include 103-107, Asp-157, Gln-200, and Gly-227; that span reads DSGGF. An RNA binding region spans residues 258–264; it reads GVGYAVD. The active-site Nucleophile is the Asp-277. An RNA binding; important for wobble base 34 recognition region spans residues 282–286; the sequence is TRTAR. Positions 315, 317, 320, and 345 each coordinate Zn(2+).

It belongs to the queuine tRNA-ribosyltransferase family. In terms of assembly, heterodimer of a catalytic subunit qtrt1 and an accessory subunit qtrt2. The cofactor is Zn(2+).

Its subcellular location is the cytoplasm. The protein localises to the mitochondrion outer membrane. It catalyses the reaction guanosine(34) in tRNA + queuine = queuosine(34) in tRNA + guanine. Catalytic subunit of the queuine tRNA-ribosyltransferase (TGT) that catalyzes the base-exchange of a guanine (G) residue with queuine (Q) at position 34 (anticodon wobble position) in tRNAs with GU(N) anticodons (tRNA-Asp, -Asn, -His and -Tyr), resulting in the hypermodified nucleoside queuosine (7-(((4,5-cis-dihydroxy-2-cyclopenten-1-yl)amino)methyl)-7-deazaguanosine). Catalysis occurs through a double-displacement mechanism. The nucleophile active site attacks the C1' of nucleotide 34 to detach the guanine base from the RNA, forming a covalent enzyme-RNA intermediate. The proton acceptor active site deprotonates the incoming queuine, allowing a nucleophilic attack on the C1' of the ribose to form the product. In Danio rerio (Zebrafish), this protein is Queuine tRNA-ribosyltransferase catalytic subunit 1.